A 62-amino-acid chain; its full sequence is uncharacterized protein (62 aa).

This sequence belongs to the asfivirus C62L family.

This is an uncharacterized protein from African swine fever virus (isolate Tick/South Africa/Pretoriuskop Pr4/1996) (ASFV).